Consider the following 1798-residue polypeptide: DNA polymerase II large subunit (1798 aa).

Residues 286 to 309 (EKGKSSEENKDESKAEDTGTESVA) form a disordered region. One can recognise a DOD-type homing endonuclease domain in the interval 1184-1319 (VVGYYLAEGY…ETLLLAKFGI (136 aa)). The disordered stretch occupies residues 1699–1798 (TGHSNGKNGY…GISLDEFFGS (100 aa)). Residues 1714–1731 (GKNGKASKKSGSLASKLS) show a composition bias toward low complexity. Residues 1733–1753 (KGKEPSKKKESAKPKRSEKVK) are compositionally biased toward basic and acidic residues.

It belongs to the archaeal DNA polymerase II family. Heterodimer of a large subunit and a small subunit. This protein undergoes a protein self splicing that involves a post-translational excision of the intervening region (intein) followed by peptide ligation.

The catalysed reaction is DNA(n) + a 2'-deoxyribonucleoside 5'-triphosphate = DNA(n+1) + diphosphate. It carries out the reaction Exonucleolytic cleavage in the 3'- to 5'-direction to yield nucleoside 5'-phosphates.. In terms of biological role, possesses two activities: a DNA synthesis (polymerase) and an exonucleolytic activity that degrades single-stranded DNA in the 3'- to 5'-direction. Has a template-primer preference which is characteristic of a replicative DNA polymerase. This chain is DNA polymerase II large subunit (polC), found in Thermococcus kodakarensis (strain ATCC BAA-918 / JCM 12380 / KOD1) (Pyrococcus kodakaraensis (strain KOD1)).